The sequence spans 505 residues: Trans-cinnamate 4-monooxygenase (505 aa).

The helical transmembrane segment at 3–23 (LLLLEKTLLGLFIAAITAIAI) threads the bilayer. (E)-cinnamate is bound by residues 213–218 (RSRLAQ) and Ala306. Cys447 lines the heme pocket.

It belongs to the cytochrome P450 family. Requires heme as cofactor.

The protein resides in the membrane. The catalysed reaction is (E)-cinnamate + reduced [NADPH--hemoprotein reductase] + O2 = (E)-4-coumarate + oxidized [NADPH--hemoprotein reductase] + H2O + H(+). It participates in phenylpropanoid metabolism; trans-4-coumarate biosynthesis; trans-4-coumarate from trans-cinnamate: step 1/1. Functionally, catalyzes the first oxidative step of the phenylpropanoid pathway in higher plants by transforming trans-cinnamate into p-coumarate. The compounds formed by this pathway are essential components for lignification, pollination, and defense against ultraviolet light, predators and pathogens. This Glycyrrhiza echinata (Licorice) protein is Trans-cinnamate 4-monooxygenase (CYP73A14).